The following is a 367-amino-acid chain: Leucine dehydrogenase (367 aa).

Lysine 80 is a catalytic residue. 180 to 186 (GVGNVAY) serves as a coordination point for NAD(+).

Belongs to the Glu/Leu/Phe/Val dehydrogenases family. Homohexamer.

It carries out the reaction L-leucine + NAD(+) + H2O = 4-methyl-2-oxopentanoate + NH4(+) + NADH + H(+). The protein operates within amino-acid degradation; L-leucine degradation; 4-methyl-2-oxopentanoate from L-leucine (dehydrogenase route): step 1/1. Functionally, catalyzes the reversible deamination of L-leucine to 4-methyl-2-oxopentanoate. The chain is Leucine dehydrogenase (ldh) from Geobacillus stearothermophilus (Bacillus stearothermophilus).